An 809-amino-acid chain; its full sequence is 3',5'-cyclic-AMP phosphodiesterase 4D (809 aa).

A disordered region spans residues 1-107; the sequence is MEAEGSSAPA…SGATGRVRHR (107 aa). Phosphoserine occurs at positions 54, 59, and 63. Residues 58–89 show a composition bias toward pro residues; sequence PPPPPPSPQPQPQCPLQPPPPPPLPPPPPPPG. Residues 90 to 102 are compositionally biased toward low complexity; it reads AARGRYASSGATG. 5 positions are modified to phosphoserine: Ser142, Ser299, Ser301, Ser348, and Ser375. The segment at 343-364 is disordered; it reads EVEIPSPTQKEKEKKKRPMSQI. In terms of domain architecture, PDEase spans 386 to 715; it reads VKTEQEDVLA…EWYQSTIPQS (330 aa). Residue Lys387 forms a Glycyl lysine isopeptide (Lys-Gly) (interchain with G-Cter in SUMO) linkage. His462 serves as the catalytic Proton donor. Residue His462 participates in 3',5'-cyclic AMP binding. His462 lines the AMP pocket. Zn(2+) is bound by residues His466, His502, Asp503, and Asp620. AMP contacts are provided by Asp503, Asp620, Asn623, Gln671, and Phe674. Asp503 is a binding site for Mg(2+). Asp503 contacts Mn(2+). Residues Gln671 and Phe674 each contribute to the 3',5'-cyclic AMP site. Disordered regions lie at residues 710–729 and 739–809; these read STIP…GRQG and TLEE…SPDT. Over residues 762 to 773 the composition is skewed to polar residues; sequence CSDSKTLCTQDS. A compositionally biased stretch (acidic residues) spans 779 to 796; that stretch reads PLDEQVEEEAVGEEEESQ.

This sequence belongs to the cyclic nucleotide phosphodiesterase family. PDE4 subfamily. Homodimer for the long isoforms. Isoforms with truncated N-termini are monomeric. Isoform 3 is part of a ternary complex containing PRKAR2A, PRKAR2B and AKAP9. Interacts with PDE4DIP. Identified in a complex composed of RYR1, PDE4D, PKA, FKBP1A and protein phosphatase 1 (PP1). Isoform 5, isoform N3 and isoform 12 bind RACK1 via their unique N-terminus. Binds ARRB2. Interacts (via N-terminal region) with SHANK2 (via proline-rich region); the interaction is increased in a PKA-dependent manner. The cofactor is Zn(2+). Requires Mg(2+) as cofactor. Mn(2+) serves as cofactor. Long isoforms that share a conserved PKA phosphorylation site in the N-terminus are activated by PKA through phosphorylation. Isoform 3 and isoform 7 are activated by phosphorylation (in vitro), but not isoform 6. Isoform N3 and isoform 12 are phosphorylated on Ser-49, Ser-51, Ser-55 and Ser-59. In terms of processing, sumoylation of long isoforms by PIAS4 augments their activation by PKA phosphorylation and represses their inhibition by ERK phosphorylation. In terms of tissue distribution, expressed in colonic epithelial cells (at protein level). Widespread; most abundant in skeletal muscle. As to expression, detected in brain. Detected in brain, placenta, lung and kidney. In terms of tissue distribution, detected in heart and skeletal muscle.

Its subcellular location is the apical cell membrane. The protein localises to the cytoplasm. The protein resides in the membrane. It is found in the cytoskeleton. It localises to the microtubule organizing center. Its subcellular location is the centrosome. It catalyses the reaction 3',5'-cyclic AMP + H2O = AMP + H(+). The protein operates within purine metabolism; 3',5'-cyclic AMP degradation; AMP from 3',5'-cyclic AMP: step 1/1. With respect to regulation, inhibited by rolipram. Activated by phosphatidic acid. Functionally, hydrolyzes the second messenger cAMP, which is a key regulator of many important physiological processes. In Homo sapiens (Human), this protein is 3',5'-cyclic-AMP phosphodiesterase 4D.